We begin with the raw amino-acid sequence, 64 residues long: Conotoxin Ts-011 (64 aa).

An N-terminal signal peptide occupies residues 1 to 22 (MHCLPVPVILLLLIASTPSVDA). Positions 23–51 (RPKTKDDVPPASFHGADNANRILRTLWNL) are excised as a propeptide. Ile63 bears the Isoleucine amide mark.

This sequence belongs to the conotoxin T superfamily. Contains 2 disulfide bonds that can be either 'C1-C3, C2-C4' or 'C1-C4, C2-C3', since these disulfide connectivities have been observed for conotoxins with cysteine framework V (for examples, see AC P0DQQ7 and AC P81755). As to expression, expressed by the venom duct.

Its subcellular location is the secreted. The polypeptide is Conotoxin Ts-011 (Conus tessulatus (Tessellate cone)).